The chain runs to 186 residues: Large ribosomal subunit protein uL6 (186 aa).

Belongs to the universal ribosomal protein uL6 family. In terms of assembly, part of the 50S ribosomal subunit.

This protein binds to the 23S rRNA, and is important in its secondary structure. It is located near the subunit interface in the base of the L7/L12 stalk, and near the tRNA binding site of the peptidyltransferase center. The chain is Large ribosomal subunit protein uL6 from Sulfurisphaera tokodaii (strain DSM 16993 / JCM 10545 / NBRC 100140 / 7) (Sulfolobus tokodaii).